A 100-amino-acid chain; its full sequence is Small ribosomal subunit protein eS24 (100 aa).

The protein belongs to the eukaryotic ribosomal protein eS24 family.

This chain is Small ribosomal subunit protein eS24, found in Methanothermobacter thermautotrophicus (strain ATCC 29096 / DSM 1053 / JCM 10044 / NBRC 100330 / Delta H) (Methanobacterium thermoautotrophicum).